We begin with the raw amino-acid sequence, 256 residues long: Thiazole synthase (256 aa).

The active-site Schiff-base intermediate with DXP is the Lys-95. 1-deoxy-D-xylulose 5-phosphate is bound by residues Gly-156, 183-184 (AG), and 205-206 (NT).

It belongs to the ThiG family. As to quaternary structure, homotetramer. Forms heterodimers with either ThiH or ThiS.

It is found in the cytoplasm. It carries out the reaction [ThiS sulfur-carrier protein]-C-terminal-Gly-aminoethanethioate + 2-iminoacetate + 1-deoxy-D-xylulose 5-phosphate = [ThiS sulfur-carrier protein]-C-terminal Gly-Gly + 2-[(2R,5Z)-2-carboxy-4-methylthiazol-5(2H)-ylidene]ethyl phosphate + 2 H2O + H(+). Its pathway is cofactor biosynthesis; thiamine diphosphate biosynthesis. Its function is as follows. Catalyzes the rearrangement of 1-deoxy-D-xylulose 5-phosphate (DXP) to produce the thiazole phosphate moiety of thiamine. Sulfur is provided by the thiocarboxylate moiety of the carrier protein ThiS. In vitro, sulfur can be provided by H(2)S. The protein is Thiazole synthase of Gluconacetobacter diazotrophicus (strain ATCC 49037 / DSM 5601 / CCUG 37298 / CIP 103539 / LMG 7603 / PAl5).